Reading from the N-terminus, the 197-residue chain is Recombination protein RecR (197 aa).

The segment at 55–70 (CVQCRDFTESEICTIC) adopts a C4-type zinc-finger fold. In terms of domain architecture, Toprim spans 78–173 (QQLCVVESPA…RPSRLAQGMP (96 aa)).

This sequence belongs to the RecR family.

May play a role in DNA repair. It seems to be involved in an RecBC-independent recombinational process of DNA repair. It may act with RecF and RecO. The chain is Recombination protein RecR from Xanthomonas oryzae pv. oryzae (strain MAFF 311018).